The primary structure comprises 269 residues: 3'(2'),5'-bisphosphate nucleotidase CysQ (269 aa).

Mg(2+) contacts are provided by glutamate 69, aspartate 89, leucine 91, aspartate 92, and aspartate 216. Glutamate 69 serves as a coordination point for substrate. Substrate contacts are provided by residues 91–94 (LDGT) and aspartate 216.

This sequence belongs to the inositol monophosphatase superfamily. CysQ family. Requires Mg(2+) as cofactor.

It is found in the cell inner membrane. It catalyses the reaction adenosine 3',5'-bisphosphate + H2O = AMP + phosphate. Its function is as follows. Converts adenosine-3',5'-bisphosphate (PAP) to AMP. This Aggregatibacter actinomycetemcomitans (Actinobacillus actinomycetemcomitans) protein is 3'(2'),5'-bisphosphate nucleotidase CysQ.